An 860-amino-acid chain; its full sequence is Photoactivated adenylate cyclase subunit beta (860 aa).

Residues 56-149 (LRRLMYLSKS…GRMYGDWHMK (94 aa)) form the BLUF 1 domain. Residues 205-333 (VVTFIYLVEF…DCINTTSRIA (129 aa)) enclose the Guanylate cyclase 1 domain. Positions 420–443 (RPPIFDDTPKGKPRPRTPGYGGRQ) are disordered. Positions 471–563 (LTTLTYISQA…RAYPAEWTLT (93 aa)) constitute a BLUF 2 domain. The 130-residue stretch at 619 to 748 (VMLATDICSF…AVSARVMEVE (130 aa)) folds into the Guanylate cyclase 2 domain. A disordered region spans residues 819 to 860 (KPLALEPEEAKQDYRVSPGRMRHGDSGRRSNSAQGKRSTQVR). Positions 847–860 (RSNSAQGKRSTQVR) are enriched in polar residues.

Belongs to the adenylyl cyclase class-4/guanylyl cyclase family. As to quaternary structure, heterotetramer of two alpha and two beta subunits. The cofactor is FAD.

The protein resides in the cell projection. It is found in the cilium. Its subcellular location is the flagellum. The catalysed reaction is ATP = 3',5'-cyclic AMP + diphosphate. Its function is as follows. Acts as a photoreceptor for the step-up photophobic response. This Euglena longa (Euglenophycean alga) protein is Photoactivated adenylate cyclase subunit beta.